Here is a 457-residue protein sequence, read N- to C-terminus: tRNA-2-methylthio-N(6)-dimethylallyladenosine synthase (457 aa).

The 118-residue stretch at 3-120 (KKVYVKTFGC…LPQMIDQRRA (118 aa)) folds into the MTTase N-terminal domain. Residues Cys12, Cys49, Cys83, Cys157, Cys161, and Cys164 each coordinate [4Fe-4S] cluster. In terms of domain architecture, Radical SAM core spans 143–377 (RVEGPSAFVS…QATIEENVAR (235 aa)). The TRAM domain maps to 380 to 447 (RSMVGKVERI…PHSLRGELLL (68 aa)).

The protein belongs to the methylthiotransferase family. MiaB subfamily. As to quaternary structure, monomer. It depends on [4Fe-4S] cluster as a cofactor.

Its subcellular location is the cytoplasm. The catalysed reaction is N(6)-dimethylallyladenosine(37) in tRNA + (sulfur carrier)-SH + AH2 + 2 S-adenosyl-L-methionine = 2-methylsulfanyl-N(6)-dimethylallyladenosine(37) in tRNA + (sulfur carrier)-H + 5'-deoxyadenosine + L-methionine + A + S-adenosyl-L-homocysteine + 2 H(+). Catalyzes the methylthiolation of N6-(dimethylallyl)adenosine (i(6)A), leading to the formation of 2-methylthio-N6-(dimethylallyl)adenosine (ms(2)i(6)A) at position 37 in tRNAs that read codons beginning with uridine. The chain is tRNA-2-methylthio-N(6)-dimethylallyladenosine synthase from Burkholderia ambifaria (strain ATCC BAA-244 / DSM 16087 / CCUG 44356 / LMG 19182 / AMMD) (Burkholderia cepacia (strain AMMD)).